A 197-amino-acid polypeptide reads, in one-letter code: Nucleoid occlusion factor SlmA (197 aa).

Residues 6–66 (NDRRTQILQA…GLIEFIEESL (61 aa)) enclose the HTH tetR-type domain. A DNA-binding region (H-T-H motif) is located at residues 29–48 (TTAALAKQVGVSEAALYRHF).

The protein belongs to the nucleoid occlusion factor SlmA family. In terms of assembly, homodimer. Interacts with FtsZ.

It is found in the cytoplasm. Its subcellular location is the nucleoid. Its function is as follows. Required for nucleoid occlusion (NO) phenomenon, which prevents Z-ring formation and cell division over the nucleoid. Acts as a DNA-associated cell division inhibitor that binds simultaneously chromosomal DNA and FtsZ, and disrupts the assembly of FtsZ polymers. SlmA-DNA-binding sequences (SBS) are dispersed on non-Ter regions of the chromosome, preventing FtsZ polymerization at these regions. The protein is Nucleoid occlusion factor SlmA of Marinomonas sp. (strain MWYL1).